The chain runs to 82 residues: Translational regulator CsrA (82 aa).

This sequence belongs to the CsrA/RsmA family. As to quaternary structure, homodimer; the beta-strands of each monomer intercalate to form a hydrophobic core, while the alpha-helices form wings that extend away from the core.

It localises to the cytoplasm. In terms of biological role, a translational regulator that binds mRNA to regulate translation initiation and/or mRNA stability. Usually binds in the 5'-UTR at or near the Shine-Dalgarno sequence preventing ribosome-binding, thus repressing translation. Its main target seems to be the major flagellin gene, while its function is anatagonized by FliW. This chain is Translational regulator CsrA, found in Brachyspira hyodysenteriae (strain ATCC 49526 / WA1).